Reading from the N-terminus, the 242-residue chain is NAD-dependent protein deacetylase (242 aa).

Residues 1-242 (MQQFEEVRTI…EFVEGLSSIK (242 aa)) enclose the Deacetylase sirtuin-type domain. NAD(+)-binding residues include Ala-23, Thr-27, Phe-34, Arg-35, Gln-102, Ile-104, Asp-105, and His-120. Phe-34 serves as a coordination point for nicotinamide. Ile-104 and Asp-105 together coordinate nicotinamide. Residue His-120 is the Proton acceptor of the active site. Residues Cys-128, Cys-131, Cys-148, and Cys-151 each coordinate Zn(2+). Positions 187, 188, 213, and 231 each coordinate NAD(+).

It belongs to the sirtuin family. Class U subfamily. It depends on Zn(2+) as a cofactor.

It is found in the cytoplasm. It carries out the reaction N(6)-acetyl-L-lysyl-[protein] + NAD(+) + H2O = 2''-O-acetyl-ADP-D-ribose + nicotinamide + L-lysyl-[protein]. In terms of biological role, NAD-dependent protein deacetylase which modulates the activities of several enzymes which are inactive in their acetylated form. In Bacillus anthracis, this protein is NAD-dependent protein deacetylase.